The following is a 233-amino-acid chain: MKSAILVFPGINRERDMARALQLASGSEPAMVWHADTELPKGTDLVVVPGGFSYGDYLRCGAIAARAPVMDAVRKFASDGGLVLGVCNGFQILCESGLLPGVLMRNARLKFICHDVHLRVERSDTPFTRGYNAGQVIRVPVAHGEGNYEADEETLQRLEGDGRVLYRYCSASGEVGEAHNINGAAASIAGIVSERGNVLGMMPHPENHVEAIMGCTDGRGLFAGLVEHLAKAA.

The Glutamine amidotransferase type-1 domain occupies 3–233; it reads SAILVFPGIN…GLVEHLAKAA (231 aa). The active-site Nucleophile is Cys87. Active-site residues include His204 and Glu206.

In terms of assembly, part of the FGAM synthase complex composed of 1 PurL, 1 PurQ and 2 PurS subunits.

Its subcellular location is the cytoplasm. It carries out the reaction N(2)-formyl-N(1)-(5-phospho-beta-D-ribosyl)glycinamide + L-glutamine + ATP + H2O = 2-formamido-N(1)-(5-O-phospho-beta-D-ribosyl)acetamidine + L-glutamate + ADP + phosphate + H(+). The enzyme catalyses L-glutamine + H2O = L-glutamate + NH4(+). Its pathway is purine metabolism; IMP biosynthesis via de novo pathway; 5-amino-1-(5-phospho-D-ribosyl)imidazole from N(2)-formyl-N(1)-(5-phospho-D-ribosyl)glycinamide: step 1/2. Its function is as follows. Part of the phosphoribosylformylglycinamidine synthase complex involved in the purines biosynthetic pathway. Catalyzes the ATP-dependent conversion of formylglycinamide ribonucleotide (FGAR) and glutamine to yield formylglycinamidine ribonucleotide (FGAM) and glutamate. The FGAM synthase complex is composed of three subunits. PurQ produces an ammonia molecule by converting glutamine to glutamate. PurL transfers the ammonia molecule to FGAR to form FGAM in an ATP-dependent manner. PurS interacts with PurQ and PurL and is thought to assist in the transfer of the ammonia molecule from PurQ to PurL. This is Phosphoribosylformylglycinamidine synthase subunit PurQ from Rhodopseudomonas palustris (strain BisB18).